We begin with the raw amino-acid sequence, 166 residues long: Small ribosomal subunit protein uS5 (166 aa).

The S5 DRBM domain maps to 11-74 (LQEKLIAVNR…EKARRNMMNV (64 aa)).

This sequence belongs to the universal ribosomal protein uS5 family. In terms of assembly, part of the 30S ribosomal subunit. Contacts proteins S4 and S8.

In terms of biological role, with S4 and S12 plays an important role in translational accuracy. Its function is as follows. Located at the back of the 30S subunit body where it stabilizes the conformation of the head with respect to the body. The protein is Small ribosomal subunit protein uS5 of Sodalis glossinidius (strain morsitans).